Consider the following 248-residue polypeptide: 2,3-bisphosphoglycerate-dependent phosphoglycerate mutase (248 aa).

Substrate contacts are provided by residues 8–15 (RHGESTWN), 21–22 (TG), R60, 87–90 (EKHY), K98, 114–115 (RR), and 183–184 (GN). H9 acts as the Tele-phosphohistidine intermediate in catalysis. The active-site Proton donor/acceptor is E87.

This sequence belongs to the phosphoglycerate mutase family. BPG-dependent PGAM subfamily.

It carries out the reaction (2R)-2-phosphoglycerate = (2R)-3-phosphoglycerate. Its pathway is carbohydrate degradation; glycolysis; pyruvate from D-glyceraldehyde 3-phosphate: step 3/5. Its function is as follows. Catalyzes the interconversion of 2-phosphoglycerate and 3-phosphoglycerate. The chain is 2,3-bisphosphoglycerate-dependent phosphoglycerate mutase from Elusimicrobium minutum (strain Pei191).